A 220-amino-acid polypeptide reads, in one-letter code: MKKIQIAIDGPASSGKSTVAKIIARNLGLIYLDTGAMYRVATLVALQEKTEDASKIIQFIENHPISFANGKNGQEVLVGLDNVTEVIRTNEVTNAVSKISAMVEIREFMVAEQQRIAQKGGIIMDGRDIGTVVLPQANLKIFLVASVDERAERRYKENLSKGIPTDLERLKVEIAERDRKDSIRVVSPLKQAEDAILLDSTGKTIKEIVQFIEEKAKKLM.

10-18 (GPASSGKST) contributes to the ATP binding site.

It belongs to the cytidylate kinase family. Type 1 subfamily.

It localises to the cytoplasm. It catalyses the reaction CMP + ATP = CDP + ADP. The catalysed reaction is dCMP + ATP = dCDP + ADP. This Lactococcus lactis subsp. cremoris (strain SK11) protein is Cytidylate kinase.